A 94-amino-acid chain; its full sequence is Integration host factor subunit beta (94 aa).

The protein belongs to the bacterial histone-like protein family. In terms of assembly, heterodimer of an alpha and a beta chain.

Functionally, this protein is one of the two subunits of integration host factor, a specific DNA-binding protein that functions in genetic recombination as well as in transcriptional and translational control. This is Integration host factor subunit beta from Azoarcus sp. (strain BH72).